Here is a 129-residue protein sequence, read N- to C-terminus: Small ribosomal subunit protein uS11 (129 aa).

This sequence belongs to the universal ribosomal protein uS11 family. As to quaternary structure, part of the 30S ribosomal subunit. Interacts with proteins S7 and S18. Binds to IF-3.

Located on the platform of the 30S subunit, it bridges several disparate RNA helices of the 16S rRNA. Forms part of the Shine-Dalgarno cleft in the 70S ribosome. The sequence is that of Small ribosomal subunit protein uS11 from Pasteurella multocida (strain Pm70).